Here is a 1678-residue protein sequence, read N- to C-terminus: Nuclear pore complex protein Nup98-Nup96 (1678 aa).

Residues 1 to 11 (MFGQNKSFGSS) show a composition bias toward low complexity. Disordered stretches follow at residues 1–41 (MFGQ…QPAN), 68–100 (SSIF…FGST), 301–366 (TTGS…GAPA), 441–473 (FGNT…TQAT), and 603–631 (SKEA…RSVH). The segment covering 12–22 (SFGGGSSGSGL) has biased composition (gly residues). Low complexity-rich tracts occupy residues 23–38 (FGQN…LFGQ) and 73–83 (SPQQPQNNQSS). Residues 306–329 (LFGNQQPQTNTGGSLFGNTQNQNQ) show a composition bias toward polar residues. Positions 345–366 (FGQAQQQPQQQSSGFSFGGAPA) are enriched in low complexity. 2 stretches are compositionally biased toward polar residues: residues 456–473 (SQPQ…TQAT) and 615–628 (RNST…LTNR). Residues 777-919 (KPDYFSLPTI…GSWVFRVDHF (143 aa)) enclose the Peptidase S59 domain. S920 serves as the catalytic Nucleophile.

It belongs to the nucleoporin GLFG family. Part of the NPC. In terms of processing, the Nup98 and Nup96 chains are autoproteolytically processed from a single precursor protein.

The protein localises to the cytoplasmic granule. The protein resides in the nucleus membrane. Its subcellular location is the nucleus. It is found in the nuclear pore complex. It localises to the nucleus envelope. The protein localises to the chromosome. Functionally, nup98 and Nup96 play a role in the bidirectional transport across the nucleoporin complex (NPC). Required for the nuclear import of hcp-4 during mitotic prophase, this step is essential for centrosome assembly and resolution. Regulates nucleoporin npp-5 localization to the nuclear membrane during interphase and to kinetochores during metaphase. Has a role in P granule integrity; may promote the 'liquid phase' of P granules by increasing the number of interacting RNA-protein complexes. Binds nos-2 mRNA, probably indirectly, and promotes its accumulation in P granules. The sequence is that of Nuclear pore complex protein Nup98-Nup96 from Caenorhabditis elegans.